We begin with the raw amino-acid sequence, 338 residues long: Solute carrier family 35 member G6 (338 aa).

The segment at 1-25 is disordered; sequence MAGSHPYLNPPDSTHPSPPSAPPSL. Transmembrane regions (helical) follow at residues 40 to 60, 67 to 87, 105 to 125, 160 to 180, 190 to 210, 221 to 241, 255 to 275, 281 to 301, and 310 to 330; these read LLVA…LSHM, LPSL…ALLL, YFYA…VQVV, CGLL…LWTL, ALGY…LLVY, TVAF…LFVL, CVGA…YAVT, LVCA…YYML, and IVGA…NLSC. In terms of domain architecture, EamA 1 spans 49-174; sequence LPAGFVGPLS…SILGLIIIVG (126 aa). In terms of domain architecture, EamA 2 spans 272–325; the sequence is YAVTKAHPALVCAVLHSEVVVALILQYYMLHETVAPSDIVGAGVVLGSIAIITA.

This sequence belongs to the SLC35G solute transporter family. As to expression, expressed in placenta and testis.

Its subcellular location is the membrane. In Homo sapiens (Human), this protein is Solute carrier family 35 member G6 (SLC35G6).